Consider the following 118-residue polypeptide: Ribosome-binding factor A (118 aa).

Belongs to the RbfA family. As to quaternary structure, monomer. Binds 30S ribosomal subunits, but not 50S ribosomal subunits or 70S ribosomes.

It localises to the cytoplasm. In terms of biological role, one of several proteins that assist in the late maturation steps of the functional core of the 30S ribosomal subunit. Associates with free 30S ribosomal subunits (but not with 30S subunits that are part of 70S ribosomes or polysomes). Required for efficient processing of 16S rRNA. May interact with the 5'-terminal helix region of 16S rRNA. The chain is Ribosome-binding factor A from Bacillus cereus (strain B4264).